The sequence spans 57 residues: Large ribosomal subunit protein bL32 (57 aa).

Over residues 1-20 the composition is skewed to basic residues; that stretch reads MAVPKKKTSKAKRDQRRATW. Residues 1-24 form a disordered region; it reads MAVPKKKTSKAKRDQRRATWRRQA.

Belongs to the bacterial ribosomal protein bL32 family.

In Gloeothece citriformis (strain PCC 7424) (Cyanothece sp. (strain PCC 7424)), this protein is Large ribosomal subunit protein bL32.